Reading from the N-terminus, the 276-residue chain is Putative non-heme chloroperoxidase (276 aa).

The region spanning 26–263 (PIVLIHGFPL…GGPHAINWTH (238 aa)) is the AB hydrolase-1 domain. Active-site residues include serine 99, aspartate 228, and histidine 257.

Belongs to the AB hydrolase superfamily. Bacterial non-heme haloperoxidase / perhydrolase family.

This Synechocystis sp. (strain ATCC 27184 / PCC 6803 / Kazusa) protein is Putative non-heme chloroperoxidase.